A 343-amino-acid chain; its full sequence is Anthranilate phosphoribosyltransferase (343 aa).

5-phospho-alpha-D-ribose 1-diphosphate-binding positions include Gly84, 87-88, Thr92, 94-97, 112-120, and Ser124; these read GD, NIST, and KHGNRGVSS. Anthranilate is bound at residue Gly84. Ser96 is a Mg(2+) binding site. Asn115 contacts anthranilate. Arg170 contributes to the anthranilate binding site. Mg(2+)-binding residues include Asp229 and Glu230.

It belongs to the anthranilate phosphoribosyltransferase family. As to quaternary structure, homodimer. Requires Mg(2+) as cofactor.

The enzyme catalyses N-(5-phospho-beta-D-ribosyl)anthranilate + diphosphate = 5-phospho-alpha-D-ribose 1-diphosphate + anthranilate. Its pathway is amino-acid biosynthesis; L-tryptophan biosynthesis; L-tryptophan from chorismate: step 2/5. Catalyzes the transfer of the phosphoribosyl group of 5-phosphorylribose-1-pyrophosphate (PRPP) to anthranilate to yield N-(5'-phosphoribosyl)-anthranilate (PRA). In Burkholderia multivorans (strain ATCC 17616 / 249), this protein is Anthranilate phosphoribosyltransferase.